The primary structure comprises 83 residues: MSSGGLLLLLGLLTLWEVLTPVSSKDRPKFCELPADIGPCEDFTGAFHYSPREHECIEFIYGGCKGNANNFNTLEECESACAA.

The signal sequence occupies residues 1–24 (MSSGGLLLLLGLLTLWEVLTPVSS). The BPTI/Kunitz inhibitor domain maps to 31–81 (CELPADIGPCEDFTGAFHYSPREHECIEFIYGGCKGNANNFNTLEECESAC). 3 disulfide bridges follow: Cys-31–Cys-81, Cys-40–Cys-64, and Cys-56–Cys-77.

Belongs to the venom Kunitz-type family. Expressed by the venom gland.

The protein resides in the secreted. Functionally, serine protease inhibitor. This is Kunitz-type serine protease inhibitor scutellin-3 from Oxyuranus scutellatus scutellatus (Australian taipan).